Consider the following 355-residue polypeptide: C-C chemokine receptor type 8 (355 aa).

The Extracellular segment spans residues 1–35; it reads MDYTLDLSVTTVTDYYYPDIFSSPCDAELIQTNGK. Residues 36-63 form a helical membrane-spanning segment; sequence LLLAVFYCLLFVFSLLGNSLVILVLVVC. The Cytoplasmic segment spans residues 64–73; that stretch reads KKLRSITDVY. A helical transmembrane segment spans residues 74–93; it reads LLNLALSDLLFVFSFPFQTY. At 94 to 107 the chain is on the extracellular side; the sequence is YLLDQWVFGTVMCK. Cysteines 106 and 183 form a disulfide. Residues 108-129 form a helical membrane-spanning segment; sequence VVSGFYYIGFYSSMFFITLMSV. Over 130 to 146 the chain is Cytoplasmic; sequence DRYLAVVHAVYALKVRT. A helical membrane pass occupies residues 147 to 171; that stretch reads IRMGTTLCLAVWLTAIMATIPLLVF. At 172-202 the chain is on the extracellular side; the sequence is YQVASEDGVLQCYSFYNQQTLKWKIFTNFKM. Residues 203–222 traverse the membrane as a helical segment; sequence NILGLLIPFTIFMFCYIKIL. The Cytoplasmic portion of the chain corresponds to 223–238; sequence HQLKRCQNHNKTKAIR. Residues 239–263 form a helical membrane-spanning segment; sequence LVLIVVIASLLFWVPFNVVLFLTSL. Over 264-280 the chain is Extracellular; it reads HSMHILDGCSISQQLTY. The helical transmembrane segment at 281-304 threads the bilayer; the sequence is ATHVTEIISFTHCCVNPVIYAFVG. Residues 305 to 355 are Cytoplasmic-facing; sequence EKFKKHLSEIFQKSCSQIFNYLGRQMPRESCEKSSSCQQHSSRSSSVDYIL.

The protein belongs to the G-protein coupled receptor 1 family.

Its subcellular location is the cell membrane. Functionally, receptor for the chemokine CCL1/SCYA1/I-309. May regulate monocyte chemotaxis and thymic cell line apoptosis. Alternative coreceptor with CD4 for HIV-1 infection. The chain is C-C chemokine receptor type 8 (CCR8) from Homo sapiens (Human).